The sequence spans 111 residues: MQKFLKLVLVTFLFLISTLTPPANAENTINGEQIFSVHCAGCHINGSNIIRRGKNLQKKTLKKYGMDSLEAIEAIVTNGKNNMSAYKDRLSEQEIQDVAAYVLEQAEKGWR.

A signal peptide spans 1-25; the sequence is MQKFLKLVLVTFLFLISTLTPPANA. Residues cysteine 39, cysteine 42, histidine 43, and methionine 83 each contribute to the heme c site.

It belongs to the cytochrome c family. PetJ subfamily. Binds 1 heme c group covalently per subunit.

The protein localises to the cellular thylakoid lumen. The sequence is that of Cytochrome c6-like from Nostoc sp. (strain PCC 7120 / SAG 25.82 / UTEX 2576).